The sequence spans 281 residues: Very long chain fatty acid elongase 7 (281 aa).

The residue at position 2 (Ala-2) is an N-acetylalanine. Topologically, residues 2–27 are lumenal; sequence AFSDLTSRTVHLYDNWIKDADPRVED. Residues 28 to 48 form a helical membrane-spanning segment; that stretch reads WLLMSSPLPQTILLGFYVYFV. Residues 49 to 72 are Cytoplasmic-facing; sequence TSLGPKLMENRKPFELKKAMITYN. Residues 73 to 93 traverse the membrane as a helical segment; that stretch reads FFIVLFSVYMCYEFVMSGWGI. Residues 94 to 115 are Lumenal-facing; sequence GYSFRCDIVDYSRSPTALRMAR. Cysteines 99 and 231 form a disulfide. The chain crosses the membrane as a helical span at residues 116-136; it reads TCWLYYFSKFIELLDTIFFVL. Positions 124, 137, 139, 142, and 147 each coordinate 3-oxoeicosanoyl-CoA. The Cytoplasmic portion of the chain corresponds to 137-142; sequence RKKNSQ. The helical transmembrane segment at 143–162 threads the bilayer; sequence VTFLHVFHHTIMPWTWWFGV. Positions 147 to 151 match the HxxHH motif motif; it reads HVFHH. The active-site Nucleophile is the His-150. The Lumenal portion of the chain corresponds to 163 to 171; the sequence is KFAAGGLGT. A helical transmembrane segment spans residues 172–194; sequence FHALLNTAVHVVMYSYYGLSALG. Residues Tyr-187, Lys-204, Thr-208, and Gln-211 each contribute to the 3-oxoeicosanoyl-CoA site. Residues 195 to 206 are Cytoplasmic-facing; it reads PAYQKYLWWKKY. The helical transmembrane segment at 207–227 threads the bilayer; that stretch reads LTSLQLVQFVIVAIHISQFFF. Residues 228–236 are Lumenal-facing; sequence MEDCKYQFP. The helical transmembrane segment at 237 to 257 threads the bilayer; it reads VFACIIMSYSFMFLLLFLHFW. The Cytoplasmic portion of the chain corresponds to 258 to 281; the sequence is YRAYTKGQRLPKTVKNGTCKNKDN. Arg-266 contacts 3-oxoeicosanoyl-CoA. A Di-lysine motif motif is present at residues 277–281; the sequence is KNKDN.

It belongs to the ELO family. ELOVL7 subfamily. In terms of assembly, homodimer. Interacts with TECR. Expressed in most tissues except heart and skeletal muscle.

Its subcellular location is the endoplasmic reticulum membrane. The enzyme catalyses a very-long-chain acyl-CoA + malonyl-CoA + H(+) = a very-long-chain 3-oxoacyl-CoA + CO2 + CoA. It carries out the reaction eicosanoyl-CoA + malonyl-CoA + H(+) = 3-oxodocosanoyl-CoA + CO2 + CoA. It catalyses the reaction (5Z,8Z,11Z,14Z)-eicosatetraenoyl-CoA + malonyl-CoA + H(+) = (7Z,10Z,13Z,16Z)-3-oxodocosatetraenoyl-CoA + CO2 + CoA. The catalysed reaction is (6Z,9Z,12Z)-octadecatrienoyl-CoA + malonyl-CoA + H(+) = (8Z,11Z,14Z)-3-oxoeicosatrienoyl-CoA + CO2 + CoA. The enzyme catalyses (9Z,12Z)-octadecadienoyl-CoA + malonyl-CoA + H(+) = (11Z,14Z)-3-oxoicosa-11,14-dienoyl-CoA + CO2 + CoA. It carries out the reaction (9Z)-octadecenoyl-CoA + malonyl-CoA + H(+) = 3-oxo-(11Z)-eicosenoyl-CoA + CO2 + CoA. It catalyses the reaction octadecanoyl-CoA + malonyl-CoA + H(+) = 3-oxoeicosanoyl-CoA + CO2 + CoA. The catalysed reaction is hexadecanoyl-CoA + malonyl-CoA + H(+) = 3-oxooctadecanoyl-CoA + CO2 + CoA. The enzyme catalyses (9Z,12Z,15Z)-octadecatrienoyl-CoA + malonyl-CoA + H(+) = (11Z,14Z,17Z)-3-oxoeicosatrienoyl-CoA + CO2 + CoA. The protein operates within lipid metabolism; fatty acid biosynthesis. Catalyzes the first and rate-limiting reaction of the four reactions that constitute the long-chain fatty acids elongation cycle. This endoplasmic reticulum-bound enzymatic process allows the addition of 2 carbons to the chain of long- and very long-chain fatty acids (VLCFAs) per cycle. Condensing enzyme with higher activity toward C18 acyl-CoAs, especially C18:3(n-3) acyl-CoAs and C18:3(n-6)-CoAs. Also active toward C20:4-, C18:0-, C18:1-, C18:2- and C16:0-CoAs, and weakly toward C20:0-CoA. Little or no activity toward C22:0-, C24:0-, or C26:0-CoAs. May participate in the production of saturated and polyunsaturated VLCFAs of different chain lengths that are involved in multiple biological processes as precursors of membrane lipids and lipid mediators. This is Very long chain fatty acid elongase 7 from Homo sapiens (Human).